A 35-amino-acid polypeptide reads, in one-letter code: Fatty acid synthase (35 aa).

S12 is an active-site residue.

Homodimer which is arranged in a head to tail fashion. Interacts with CEACAM1; this interaction is insulin and phosphorylation-dependent; reduces fatty-acid synthase activity.

It is found in the cytoplasm. The protein resides in the melanosome. The catalysed reaction is acetyl-CoA + n malonyl-CoA + 2n NADPH + 2n H(+) = a long-chain fatty acid + (n+1) CoA + n CO2 + 2n NADP(+).. Its function is as follows. Fatty acid synthetase catalyzes the formation of long-chain fatty acids from acetyl-CoA, malonyl-CoA and NADPH. This multifunctional protein has 7 catalytic activities as an acyl carrier protein. Functionally, this fragment is from the acyltransferase domain of the fatty acid synthetase. This is Fatty acid synthase (FASN) from Capra hircus (Goat).